Here is a 358-residue protein sequence, read N- to C-terminus: 4-hydroxy-3-methylbut-2-en-1-yl diphosphate synthase (flavodoxin) (358 aa).

[4Fe-4S] cluster is bound by residues Cys270, Cys273, Cys305, and Glu312.

It belongs to the IspG family. It depends on [4Fe-4S] cluster as a cofactor.

It catalyses the reaction (2E)-4-hydroxy-3-methylbut-2-enyl diphosphate + oxidized [flavodoxin] + H2O + 2 H(+) = 2-C-methyl-D-erythritol 2,4-cyclic diphosphate + reduced [flavodoxin]. It functions in the pathway isoprenoid biosynthesis; isopentenyl diphosphate biosynthesis via DXP pathway; isopentenyl diphosphate from 1-deoxy-D-xylulose 5-phosphate: step 5/6. Its function is as follows. Converts 2C-methyl-D-erythritol 2,4-cyclodiphosphate (ME-2,4cPP) into 1-hydroxy-2-methyl-2-(E)-butenyl 4-diphosphate. This chain is 4-hydroxy-3-methylbut-2-en-1-yl diphosphate synthase (flavodoxin), found in Ruthia magnifica subsp. Calyptogena magnifica.